The sequence spans 948 residues: Coatomer subunit beta-2 (948 aa).

HEAT repeat units lie at residues 49-87 (ETIPQLFITIIRYVLPSEDHTIQKLLLLYLELIEKTDSK), 92-126 (PEMILICQNLRNNLQHPNEYIRGVTLRFLCRMKET), 127-164 (EIVEPLTPSVLQNLEHRHPFVRRNAILAIMSIYKLPHG), 274-311 (TAIRAAANTYCQLLLSQSDNNVKLILLDRLYELKTLHR), 312-349 (DIMVELIIDVLRALSSPNLDIRRKTLDIALDLITHHNI), and 391-428 (EVASTVVHLLMDFLGDSNVASALDVVVFVREIIETNPK).

Oligomeric complex that consists of at least the alpha, beta, beta', gamma, delta, epsilon and zeta subunits.

It localises to the cytoplasm. Its subcellular location is the golgi apparatus membrane. It is found in the cytoplasmic vesicle. The protein localises to the COPI-coated vesicle membrane. In terms of biological role, the coatomer is a cytosolic protein complex that binds to dilysine motifs and reversibly associates with Golgi non-clathrin-coated vesicles, which further mediate biosynthetic protein transport from the ER, via the Golgi up to the trans Golgi network. Coatomer complex is required for budding from Golgi membranes, and is essential for the retrograde Golgi-to-ER transport of dilysine-tagged proteins. This is Coatomer subunit beta-2 from Arabidopsis thaliana (Mouse-ear cress).